Here is a 353-residue protein sequence, read N- to C-terminus: Rhodopsin (353 aa).

Residues 1 to 36 (MNGTEGPYFYVPMVNTSGIVRSPYEYPQYYLVNPAA) lie on the Extracellular side of the membrane. N-linked (GlcNAc...) asparagine glycosylation is found at Asn2 and Asn15. A helical membrane pass occupies residues 37 to 61 (YAALGAYMFLLILVGFPINFLTLYV). Residues 62-73 (TIEHKKLRTPLN) are Cytoplasmic-facing. A helical transmembrane segment spans residues 74 to 96 (YILLNLAVADLFMVFGGFTTTMY). Residues 97–110 (TSMHGYFVLGRLGC) lie on the Extracellular side of the membrane. A disulfide bond links Cys110 and Cys187. Residues 111-133 (NIEGFFATLGGEIALWSLVVLAI) form a helical membrane-spanning segment. Residues 134-136 (ERW) carry the 'Ionic lock' involved in activated form stabilization motif. Residues 134–152 (ERWVVVCKPISNFRFGENH) lie on the Cytoplasmic side of the membrane. Residues 153–173 (AIMGLAFTWLMALACAAPPLV) form a helical membrane-spanning segment. The Extracellular segment spans residues 174 to 202 (GWSRYIPEGMQCSCGIDYYTRAEGFNNES). Residue Asn200 is glycosylated (N-linked (GlcNAc...) asparagine). A helical transmembrane segment spans residues 203–224 (FVIYMFICHFSIPLLVVFFCYG). Residues 225 to 252 (RLLCAVKEAAAAQQESETTQRAEREVTR) lie on the Cytoplasmic side of the membrane. A helical membrane pass occupies residues 253–274 (MVIMMVIAFLVCWLPYASVAWW). Residues 275-286 (IFTHQGSDFGPV) lie on the Extracellular side of the membrane. A helical membrane pass occupies residues 287-308 (FMTIPAFFAKSSSIYNPMIYIC). N6-(retinylidene)lysine is present on Lys296. Topologically, residues 309–353 (LNKQFRHCMITTLCCGKNPFEEEEGASTASKTEASSVSSSSVSPA) are cytoplasmic. S-palmitoyl cysteine attachment occurs at residues Cys322 and Cys323. A disordered region spans residues 331–353 (EEGASTASKTEASSVSSSSVSPA). Low complexity predominate over residues 334-353 (ASTASKTEASSVSSSSVSPA).

This sequence belongs to the G-protein coupled receptor 1 family. Opsin subfamily. In terms of processing, phosphorylated on some or all of the serine and threonine residues present in the C-terminal region. Contains one covalently linked retinal chromophore.

It localises to the membrane. It is found in the cell projection. The protein localises to the cilium. The protein resides in the photoreceptor outer segment. Its function is as follows. Photoreceptor required for image-forming vision at low light intensity. While most salt water fish species use retinal as chromophore, most freshwater fish use 3-dehydroretinal, or a mixture of retinal and 3-dehydroretinal. Light-induced isomerization of 11-cis to all-trans retinal triggers a conformational change that activates signaling via G-proteins. Subsequent receptor phosphorylation mediates displacement of the bound G-protein alpha subunit by arrestin and terminates signaling. The sequence is that of Rhodopsin (rho) from Diplodus vulgaris (Common two-banded seabream).